We begin with the raw amino-acid sequence, 547 residues long: Smu-2 suppressor of mec-8 and unc-52 protein (547 aa).

Disordered regions lie at residues 18-125 (TSAR…AQDQ), 164-202 (IDKSDDDDDDDIDTAFDEKVTSSSSSSKPSEASLLAQEL), 288-459 (AEPK…AGPK), 496-515 (NGEGGRKNKKQSAVSDAKRL), and 524-547 (KIMDKRKAGGDGAGGGGDYKKPKY). Residues 34–44 (ADPKTGDDKPA) are compositionally biased toward basic and acidic residues. The span at 45 to 58 (SFKHKHLKPAKFKK) shows a compositional bias: basic residues. Residues 66–94 (KAKKEKTEADEDEAALKNILKNYRDRAAE) are a coiled coil. A compositionally biased stretch (basic and acidic residues) spans 87–106 (NYRDRAAERRKQGDEKEDPS). A required and sufficient for interaction with smu-1 region spans residues 163 to 223 (EIDKSDDDDD…SLHRVLFKNE (61 aa)). Residues 166–178 (KSDDDDDDDIDTA) show a composition bias toward acidic residues. Composition is skewed to low complexity over residues 185–196 (SSSSSSKPSEAS) and 307–317 (APGAAAAAPGA). The segment covering 330 to 423 (VPSRKSRDSR…EREKKRKELE (94 aa)) has biased composition (basic and acidic residues). Repeat copies occupy residues 336–337 (RD), 339–340 (RD), 348–349 (RD), 350–351 (RS), 352–353 (RD), 354–355 (RS), 356–357 (RD), 358–359 (RD), 360–361 (RD), 362–363 (RD), 364–365 (RD), and 367–368 (RD). A 12 X 2 AA repeats of R-[DS] region spans residues 336–368 (RDSRDAGRRGSRRDRSRDRSRDRDRDRDRDNRD). A coiled-coil region spans residues 371-427 (FEKSANSRREEEQNRREQQRERERAEQERRREREKEREQEKAKEREKKRKELEESSG).

The protein belongs to the RED family. As to quaternary structure, probable component of the spliceosome. Heterotetramer with smu-1. The smu-1 homodimer interacts (via the N-terminal region including the LisH and CTLH domains) with smu-2, giving rise to a heterotetramer. As to expression, ubiquitous.

Its subcellular location is the nucleus. Functionally, auxiliary spliceosomal protein that regulates selection of alternative splice sites in a small set of target pre-mRNA species. Selectively regulates alternative splicing of unc-52 exon 17. Thus, smu-2 mutants selectively suppress the effects of unc-52 nonsense mutations in exon 17 by promoting the accumulation of unc-52 isoforms that lack exon 17. In contrast, smu-2 mutants do not suppress the effects of an unc-52 mutation that affects the 5' splice site of exon 16. Required for normal accumulation of smu-1. The chain is Smu-2 suppressor of mec-8 and unc-52 protein from Caenorhabditis elegans.